The following is a 311-amino-acid chain: tRNA pseudouridine synthase B (311 aa).

The Nucleophile role is filled by Asp-52.

The protein belongs to the pseudouridine synthase TruB family. Type 1 subfamily.

The enzyme catalyses uridine(55) in tRNA = pseudouridine(55) in tRNA. Its function is as follows. Responsible for synthesis of pseudouridine from uracil-55 in the psi GC loop of transfer RNAs. The protein is tRNA pseudouridine synthase B of Burkholderia mallei (strain ATCC 23344).